A 191-amino-acid polypeptide reads, in one-letter code: Ribonuclease HII (191 aa).

The region spanning 7 to 191 (ILMAGVDEVG…YSPVADLISK (185 aa)) is the RNase H type-2 domain. Asp-13, Glu-14, and Asp-103 together coordinate a divalent metal cation.

The protein belongs to the RNase HII family. Mn(2+) is required as a cofactor. The cofactor is Mg(2+).

Its subcellular location is the cytoplasm. It carries out the reaction Endonucleolytic cleavage to 5'-phosphomonoester.. Its function is as follows. Endonuclease that specifically degrades the RNA of RNA-DNA hybrids. This is Ribonuclease HII from Legionella pneumophila (strain Paris).